Consider the following 187-residue polypeptide: Glutathione-dependent formaldehyde-activating enzyme (187 aa).

Positions Phe20–Asp167 constitute a CENP-V/GFA domain. Residues Cys27, Cys29, Cys48, Cys50, Cys53, Cys95, and Cys98 each coordinate Zn(2+).

It belongs to the Gfa family. It depends on Zn(2+) as a cofactor.

The enzyme catalyses S-(hydroxymethyl)glutathione = glutathione + formaldehyde. It participates in one-carbon metabolism; formaldehyde degradation; formate from formaldehyde (glutathione route): step 1/3. Its function is as follows. Catalyzes the condensation of formaldehyde and glutathione to S-hydroxymethylglutathione. This Bradyrhizobium sp. (strain BTAi1 / ATCC BAA-1182) protein is Glutathione-dependent formaldehyde-activating enzyme.